The following is a 79-amino-acid chain: Large ribosomal subunit protein uL22 (79 aa).

Belongs to the universal ribosomal protein uL22 family. Part of the 50S ribosomal subunit.

This protein binds specifically to 23S rRNA; its binding is stimulated by other ribosomal proteins, e.g. L4, L17, and L20. It is important during the early stages of 50S assembly. It makes multiple contacts with different domains of the 23S rRNA in the assembled 50S subunit and ribosome. Its function is as follows. The globular domain of the protein is located near the polypeptide exit tunnel on the outside of the subunit, while an extended beta-hairpin is found that lines the wall of the exit tunnel in the center of the 70S ribosome. This chain is Large ribosomal subunit protein uL22 (rplV), found in Clover proliferation phytoplasma.